We begin with the raw amino-acid sequence, 82 residues long: UPF0437 protein in nifX-nifW intergenic region (82 aa).

The protein belongs to the UPF0437 family.

The sequence is that of UPF0437 protein in nifX-nifW intergenic region from Frankia alni.